An 863-amino-acid chain; its full sequence is Glycerol-3-phosphate acyltransferase (863 aa).

Positions 1–29 (MPKKNSPLLPKETTTTQSSVDTSGSSNLT) are disordered. Residues 12–29 (ETTTTQSSVDTSGSSNLT) are compositionally biased toward polar residues. The short motif at 343-348 (SHRSHM) is the HXXXXD motif element.

Belongs to the GPAT/DAPAT family.

It localises to the cell inner membrane. The catalysed reaction is sn-glycerol 3-phosphate + an acyl-CoA = a 1-acyl-sn-glycero-3-phosphate + CoA. It functions in the pathway phospholipid metabolism; CDP-diacylglycerol biosynthesis; CDP-diacylglycerol from sn-glycerol 3-phosphate: step 1/3. In Xylella fastidiosa (strain M23), this protein is Glycerol-3-phosphate acyltransferase.